Consider the following 259-residue polypeptide: Small ribosomal subunit protein eS1 (259 aa).

Disordered stretches follow at residues 1-23 (MAVG…KTAD) and 235-259 (ESKS…VDSV). Residues 8–19 (KVTKGGKKGGKK) are compositionally biased toward basic residues. The span at 246–259 (SRPDHYEPPKVDSV) shows a compositional bias: basic and acidic residues.

It belongs to the eukaryotic ribosomal protein eS1 family. As to quaternary structure, component of the small ribosomal subunit. Mature ribosomes consist of a small (40S) and a large (60S) subunit. The 40S subunit contains about 33 different proteins and 1 molecule of RNA (18S). The 60S subunit contains about 49 different proteins and 3 molecules of RNA (28S, 5.8S and 5S).

The protein resides in the cytoplasm. In Schistosoma japonicum (Blood fluke), this protein is Small ribosomal subunit protein eS1.